The primary structure comprises 269 residues: 4-hydroxy-tetrahydrodipicolinate reductase (269 aa).

NAD(+)-binding positions include 8–13 and E34; that span reads GAAGRM. R35 is an NADP(+) binding site. NAD(+)-binding positions include 98 to 100 and 122 to 125; these read GTT and APNY. The active-site Proton donor/acceptor is H155. H156 lines the (S)-2,3,4,5-tetrahydrodipicolinate pocket. K159 acts as the Proton donor in catalysis. 165 to 166 provides a ligand contact to (S)-2,3,4,5-tetrahydrodipicolinate; that stretch reads GT.

The protein belongs to the DapB family.

The protein resides in the cytoplasm. It carries out the reaction (S)-2,3,4,5-tetrahydrodipicolinate + NAD(+) + H2O = (2S,4S)-4-hydroxy-2,3,4,5-tetrahydrodipicolinate + NADH + H(+). It catalyses the reaction (S)-2,3,4,5-tetrahydrodipicolinate + NADP(+) + H2O = (2S,4S)-4-hydroxy-2,3,4,5-tetrahydrodipicolinate + NADPH + H(+). Its pathway is amino-acid biosynthesis; L-lysine biosynthesis via DAP pathway; (S)-tetrahydrodipicolinate from L-aspartate: step 4/4. In terms of biological role, catalyzes the conversion of 4-hydroxy-tetrahydrodipicolinate (HTPA) to tetrahydrodipicolinate. This Vibrio vulnificus (strain CMCP6) protein is 4-hydroxy-tetrahydrodipicolinate reductase.